The sequence spans 159 residues: Large ribosomal subunit protein uL23m (159 aa).

Belongs to the universal ribosomal protein uL23 family. In terms of assembly, component of the mitochondrial ribosome large subunit (39S) which comprises a 16S rRNA and about 50 distinct proteins.

The protein resides in the mitochondrion. The sequence is that of Large ribosomal subunit protein uL23m (mrpl-23) from Caenorhabditis briggsae.